The following is a 131-amino-acid chain: MATIPSVVREITLVGEQIFDHTQVVRAEIDRFVERFERNERHREFDGILRASHALVESSETPVEGLFDMGKMEHMTQCVDDITKKLQTLVEPKYQKEHDVYLEKVKEDQKKYVDVCREQAMNKMRSMTAHR.

Belongs to the BLOC1S5 family. Component of the biogenesis of lysosome-related organelles complex-1 (BLOC-1) composed at least of blos-1, blos-2, blos-4, dsbn-1, glo-2, mutd-1 and snpn-1.

In terms of biological role, component of the biogenesis of lysosome-related organelles complex-1 (BLOC-1) involved in gut granule biogenesis. The polypeptide is Biogenesis of lysosome-related organelles complex 1 subunit 5 (mutd-1) (Caenorhabditis elegans).